Reading from the N-terminus, the 92-residue chain is Small ribosomal subunit protein uS19c (92 aa).

The protein belongs to the universal ribosomal protein uS19 family.

It is found in the plastid. It localises to the chloroplast. Its function is as follows. Protein S19 forms a complex with S13 that binds strongly to the 16S ribosomal RNA. The polypeptide is Small ribosomal subunit protein uS19c (Manihot esculenta (Cassava)).